The primary structure comprises 304 residues: tRNA dimethylallyltransferase (304 aa).

8–15 provides a ligand contact to ATP; it reads GPTASGKS. 10–15 contacts substrate; sequence TASGKS. The interaction with substrate tRNA stretch occupies residues 33-36; it reads DSRQ.

Belongs to the IPP transferase family. As to quaternary structure, monomer. It depends on Mg(2+) as a cofactor.

The catalysed reaction is adenosine(37) in tRNA + dimethylallyl diphosphate = N(6)-dimethylallyladenosine(37) in tRNA + diphosphate. In terms of biological role, catalyzes the transfer of a dimethylallyl group onto the adenine at position 37 in tRNAs that read codons beginning with uridine, leading to the formation of N6-(dimethylallyl)adenosine (i(6)A). The polypeptide is tRNA dimethylallyltransferase (Chlorobium luteolum (strain DSM 273 / BCRC 81028 / 2530) (Pelodictyon luteolum)).